We begin with the raw amino-acid sequence, 450 residues long: Bifunctional protein GlmU (450 aa).

A pyrophosphorylase region spans residues 1–226 (MLAVAVLAAG…PDEVNGINNR (226 aa)). Residues 7 to 10 (LAAG), lysine 21, glutamine 73, and 78 to 79 (GT) each bind UDP-N-acetyl-alpha-D-glucosamine. Aspartate 103 serves as a coordination point for Mg(2+). Residues glycine 140, glutamate 155, asparagine 170, and asparagine 224 each contribute to the UDP-N-acetyl-alpha-D-glucosamine site. Asparagine 224 serves as a coordination point for Mg(2+). Residues 227-247 (QQLAQCETMLQERLRHHWMAE) are linker. The segment at 248-450 (GVTFVDPASC…IKENWAGPQG (203 aa)) is N-acetyltransferase. The UDP-N-acetyl-alpha-D-glucosamine site is built by arginine 329 and lysine 347. The Proton acceptor role is filled by histidine 359. UDP-N-acetyl-alpha-D-glucosamine contacts are provided by tyrosine 362 and asparagine 373. Residues alanine 376, 382-383 (NY), alanine 419, and arginine 436 each bind acetyl-CoA.

It in the N-terminal section; belongs to the N-acetylglucosamine-1-phosphate uridyltransferase family. In the C-terminal section; belongs to the transferase hexapeptide repeat family. As to quaternary structure, homotrimer. It depends on Mg(2+) as a cofactor.

The protein resides in the cytoplasm. It carries out the reaction alpha-D-glucosamine 1-phosphate + acetyl-CoA = N-acetyl-alpha-D-glucosamine 1-phosphate + CoA + H(+). The catalysed reaction is N-acetyl-alpha-D-glucosamine 1-phosphate + UTP + H(+) = UDP-N-acetyl-alpha-D-glucosamine + diphosphate. The protein operates within nucleotide-sugar biosynthesis; UDP-N-acetyl-alpha-D-glucosamine biosynthesis; N-acetyl-alpha-D-glucosamine 1-phosphate from alpha-D-glucosamine 6-phosphate (route II): step 2/2. It functions in the pathway nucleotide-sugar biosynthesis; UDP-N-acetyl-alpha-D-glucosamine biosynthesis; UDP-N-acetyl-alpha-D-glucosamine from N-acetyl-alpha-D-glucosamine 1-phosphate: step 1/1. Its pathway is bacterial outer membrane biogenesis; LPS lipid A biosynthesis. Catalyzes the last two sequential reactions in the de novo biosynthetic pathway for UDP-N-acetylglucosamine (UDP-GlcNAc). The C-terminal domain catalyzes the transfer of acetyl group from acetyl coenzyme A to glucosamine-1-phosphate (GlcN-1-P) to produce N-acetylglucosamine-1-phosphate (GlcNAc-1-P), which is converted into UDP-GlcNAc by the transfer of uridine 5-monophosphate (from uridine 5-triphosphate), a reaction catalyzed by the N-terminal domain. This chain is Bifunctional protein GlmU, found in Synechococcus sp. (strain RCC307).